Consider the following 223-residue polypeptide: Octanoyltransferase (223 aa).

One can recognise a BPL/LPL catalytic domain in the interval 32 to 207 (DETPDEIWLV…HFAHHLAITD (176 aa)). Substrate-binding positions include 71–78 (RGGQVTYH), 138–140 (SLG), and 151–153 (GLA). Cys169 (acyl-thioester intermediate) is an active-site residue.

It belongs to the LipB family.

It localises to the cytoplasm. It catalyses the reaction octanoyl-[ACP] + L-lysyl-[protein] = N(6)-octanoyl-L-lysyl-[protein] + holo-[ACP] + H(+). It functions in the pathway protein modification; protein lipoylation via endogenous pathway; protein N(6)-(lipoyl)lysine from octanoyl-[acyl-carrier-protein]: step 1/2. Catalyzes the transfer of endogenously produced octanoic acid from octanoyl-acyl-carrier-protein onto the lipoyl domains of lipoate-dependent enzymes. Lipoyl-ACP can also act as a substrate although octanoyl-ACP is likely to be the physiological substrate. This Erwinia tasmaniensis (strain DSM 17950 / CFBP 7177 / CIP 109463 / NCPPB 4357 / Et1/99) protein is Octanoyltransferase.